We begin with the raw amino-acid sequence, 281 residues long: Nuclear receptor-interacting protein 2 (281 aa).

The interval 18–85 is disordered; the sequence is ESCSTGQRQA…RAHLSQQRRL (68 aa). Residues 36 to 47 are compositionally biased toward pro residues; it reads TPPPSSPWPTPP. A compositionally biased stretch (basic and acidic residues) spans 55 to 78; sequence QEARRDEGEARTRGQEAQLRDRAH. Residues 244 to 248 carry the LXXLL motif motif; that stretch reads LQTLL.

As to quaternary structure, interacts with NR1F2, RARA and THRB in a ligand-dependent manner.

It localises to the nucleus. Down-regulates transcriptional activation by nuclear receptors such as NR1F2. In Homo sapiens (Human), this protein is Nuclear receptor-interacting protein 2 (NRIP2).